A 356-amino-acid chain; its full sequence is UDP-N-acetylglucosamine--N-acetylmuramyl-(pentapeptide) pyrophosphoryl-undecaprenol N-acetylglucosamine transferase (356 aa).

The UDP-N-acetyl-alpha-D-glucosamine site is built by R166, S196, and Q290.

Belongs to the glycosyltransferase 28 family. MurG subfamily.

It is found in the cell membrane. The catalysed reaction is Mur2Ac(oyl-L-Ala-gamma-D-Glu-L-Lys-D-Ala-D-Ala)-di-trans,octa-cis-undecaprenyl diphosphate + UDP-N-acetyl-alpha-D-glucosamine = beta-D-GlcNAc-(1-&gt;4)-Mur2Ac(oyl-L-Ala-gamma-D-Glu-L-Lys-D-Ala-D-Ala)-di-trans,octa-cis-undecaprenyl diphosphate + UDP + H(+). Its pathway is cell wall biogenesis; peptidoglycan biosynthesis. In terms of biological role, cell wall formation. Catalyzes the transfer of a GlcNAc subunit on undecaprenyl-pyrophosphoryl-MurNAc-pentapeptide (lipid intermediate I) to form undecaprenyl-pyrophosphoryl-MurNAc-(pentapeptide)GlcNAc (lipid intermediate II). This chain is UDP-N-acetylglucosamine--N-acetylmuramyl-(pentapeptide) pyrophosphoryl-undecaprenol N-acetylglucosamine transferase, found in Staphylococcus aureus (strain MRSA252).